We begin with the raw amino-acid sequence, 316 residues long: HPr kinase/phosphorylase (316 aa).

Catalysis depends on residues His143 and Lys164. ATP is bound at residue 158 to 165 (GEAGSGKS). Ser165 lines the Mg(2+) pocket. Catalysis depends on Asp182, which acts as the Proton acceptor; for phosphorylation activity. Proton donor; for dephosphorylation activity. The important for the catalytic mechanism of both phosphorylation and dephosphorylation stretch occupies residues 206-215 (LEVRGLGVLN). Residue Glu207 participates in Mg(2+) binding. The active site involves Arg251. Residues 272 to 277 (PVMPGR) are important for the catalytic mechanism of dephosphorylation.

This sequence belongs to the HPrK/P family. Homohexamer. Mg(2+) serves as cofactor.

The enzyme catalyses [HPr protein]-L-serine + ATP = [HPr protein]-O-phospho-L-serine + ADP + H(+). It catalyses the reaction [HPr protein]-O-phospho-L-serine + phosphate + H(+) = [HPr protein]-L-serine + diphosphate. Its function is as follows. Catalyzes the ATP- as well as the pyrophosphate-dependent phosphorylation of a specific serine residue in HPr, a phosphocarrier protein of the phosphoenolpyruvate-dependent sugar phosphotransferase system (PTS). HprK/P also catalyzes the pyrophosphate-producing, inorganic phosphate-dependent dephosphorylation (phosphorolysis) of seryl-phosphorylated HPr (P-Ser-HPr). This Stenotrophomonas maltophilia (strain R551-3) protein is HPr kinase/phosphorylase.